The following is a 288-amino-acid chain: Threonine-rich protein (288 aa).

The signal sequence occupies residues 1 to 20; the sequence is MKAFLLSLATLLACIVLTES. Polar residues predominate over residues 141 to 150; it reads TTVTPQTTDG. The disordered stretch occupies residues 141–260; sequence TTVTPQTTDG…PAPTTTPAPT (120 aa). The span at 151 to 253 shows a compositional bias: low complexity; that stretch reads NTTTEAPTST…TAAPTTTPAP (103 aa).

In terms of tissue distribution, component of the acid-insoluble and acid-soluble organic matrix of the aragonitic skeleton (at protein level).

It localises to the secreted. This is Threonine-rich protein from Acropora millepora (Staghorn coral).